The following is a 403-amino-acid chain: Phosphoglycerate kinase (403 aa).

Substrate contacts are provided by residues 21–23 (DFN), R36, 59–62 (HLGR), R119, and R154. ATP is bound by residues K207, G299, E330, and 357–360 (GGDA).

Belongs to the phosphoglycerate kinase family. As to quaternary structure, monomer.

The protein localises to the cytoplasm. The catalysed reaction is (2R)-3-phosphoglycerate + ATP = (2R)-3-phospho-glyceroyl phosphate + ADP. It participates in carbohydrate degradation; glycolysis; pyruvate from D-glyceraldehyde 3-phosphate: step 2/5. This Chlamydia felis (strain Fe/C-56) (Chlamydophila felis) protein is Phosphoglycerate kinase.